We begin with the raw amino-acid sequence, 62 residues long: Photosystem II reaction center protein Z (62 aa).

2 helical membrane-spanning segments follow: residues 8–28 and 41–61; these read AVFALIVTSSILLISVPVVFA and FSGTSLWIGLVFLVGILNSLI.

The protein belongs to the PsbZ family. PSII is composed of 1 copy each of membrane proteins PsbA, PsbB, PsbC, PsbD, PsbE, PsbF, PsbH, PsbI, PsbJ, PsbK, PsbL, PsbM, PsbT, PsbY, PsbZ, Psb30/Ycf12, at least 3 peripheral proteins of the oxygen-evolving complex and a large number of cofactors. It forms dimeric complexes.

It is found in the plastid. The protein localises to the chloroplast thylakoid membrane. May control the interaction of photosystem II (PSII) cores with the light-harvesting antenna, regulates electron flow through the 2 photosystem reaction centers. PSII is a light-driven water plastoquinone oxidoreductase, using light energy to abstract electrons from H(2)O, generating a proton gradient subsequently used for ATP formation. The protein is Photosystem II reaction center protein Z of Pisum sativum (Garden pea).